Here is a 443-residue protein sequence, read N- to C-terminus: EP1-like glycoprotein 4 (443 aa).

Positions 1-22 are cleaved as a signal peptide; the sequence is MEFSTTLALFFTLSIFLVGAQA. A Bulb-type lectin domain is found at 29–159; the sequence is QFRVVNEGGY…NGKFVWQSFD (131 aa). Asn66, Asn102, Asn258, and Asn269 each carry an N-linked (GlcNAc...) asparagine glycan. Residues 254–296 form a WD repeat; sequence GSQFNVSTFLSRPKHNATLSFLRLESDGNIRVWSYSTLATSTA. A PAN domain is found at 356 to 433; the sequence is CDPKTFHYFK…TSLVAYVKAP (78 aa). 2 disulfides stabilise this stretch: Cys387-Cys409 and Cys391-Cys397. The N-linked (GlcNAc...) asparagine glycan is linked to Asn434.

The protein resides in the secreted. It localises to the cell wall. In Arabidopsis thaliana (Mouse-ear cress), this protein is EP1-like glycoprotein 4.